The chain runs to 273 residues: Nickel import ATP-binding protein NikE (273 aa).

An ABC transporter domain is found at 13 to 252; it reads YRTGGLLRKR…AHPVGRQLQA (240 aa). Residue 45–52 coordinates ATP; it reads GSSGSGKS.

Belongs to the ABC transporter superfamily. Nickel importer (TC 3.A.1.5.3) family. As to quaternary structure, the complex is composed of two ATP-binding proteins (NikD and NikE), two transmembrane proteins (NikB and NikC) and a solute-binding protein (NikA).

The protein localises to the cell inner membrane. The enzyme catalyses Ni(2+)(out) + ATP + H2O = Ni(2+)(in) + ADP + phosphate + H(+). Functionally, part of the ABC transporter complex NikABCDE involved in nickel import. Responsible for energy coupling to the transport system. This is Nickel import ATP-binding protein NikE from Pseudomonas putida (strain ATCC 47054 / DSM 6125 / CFBP 8728 / NCIMB 11950 / KT2440).